The primary structure comprises 342 residues: Selenide, water dikinase (342 aa).

C13 is a catalytic residue. ATP contacts are provided by residues K16 and 44–46 (SCD). D47 provides a ligand contact to Mg(2+). Residues D64, D87, and 134–136 (GHS) contribute to the ATP site. D87 is a binding site for Mg(2+). A Mg(2+)-binding site is contributed by D222.

The protein belongs to the selenophosphate synthase 1 family. Class I subfamily. As to quaternary structure, homodimer. It depends on Mg(2+) as a cofactor.

It carries out the reaction hydrogenselenide + ATP + H2O = selenophosphate + AMP + phosphate + 2 H(+). Synthesizes selenophosphate from selenide and ATP. The sequence is that of Selenide, water dikinase from Agathobacter rectalis (strain ATCC 33656 / DSM 3377 / JCM 17463 / KCTC 5835 / VPI 0990) (Eubacterium rectale).